We begin with the raw amino-acid sequence, 635 residues long: Thrombopoietin receptor (635 aa).

An N-terminal signal peptide occupies residues 1–25 (MPSWALFMVTSCLLLAPQNLAQVSS). The Extracellular segment spans residues 26-491 (QDVSLLASDS…RVETATETAW (466 aa)). 2 disulfide bridges follow: cysteine 40–cysteine 50 and cysteine 77–cysteine 93. Residues asparagine 117 and asparagine 178 are each glycosylated (N-linked (GlcNAc...) asparagine). The region spanning 172–281 (GPRDPKNSTG…WSLPVTVDLP (110 aa)) is the Fibronectin type-III 1 domain. Disulfide bonds link cysteine 193–cysteine 323, cysteine 194–cysteine 241, cysteine 291–cysteine 301, and cysteine 334–cysteine 352. A disordered region spans residues 205–232 (ALDQSPCAQPTMPWQDGPKQTSPSREAS). Asparagine 298 carries an N-linked (GlcNAc...) asparagine glycan. N-linked (GlcNAc...) asparagine glycosylation occurs at asparagine 358. The Fibronectin type-III 2 domain occupies 392-486 (PTPNLHWREI…WSDPTRVETA (95 aa)). The short motif at 474 to 478 (WSSWS) is the WSXWS motif element. Residues 492–513 (ISLVTALHLVLGLSAVLGLLLL) traverse the membrane as a helical segment. Residues 514–635 (RWQFPAHYRR…YLPLSYWQQP (122 aa)) lie on the Cytoplasmic side of the membrane. The Box 1 motif motif lies at 528–536 (LWPSLPDLH). Glycyl lysine isopeptide (Lys-Gly) (interchain with G-Cter in ubiquitin) cross-links involve residues lysine 553 and lysine 573. Phosphotyrosine occurs at positions 591, 626, and 631.

The protein belongs to the type I cytokine receptor family. Type 1 subfamily. As to quaternary structure, homodimer. Interacts with ATXN2L. Interacts with JAK2 and TYK2; these interactions increase MPL localization to the cell membrane. Interacts with THPO. Interacts with SHIP/INPP5D. Interacts with BTK. Interacts with SYK; this interaction negatively regulates THPO-mediated ERK1/2 signaling. Post-translationally, phosphorylated at Tyr-591 in response to THPO stimulation. In terms of processing, ubiquitination at Lys-553 and Lys-573 targets MPL for degradation by both the lysosomal and proteasomal pathways. The E3 ubiquitin-protein ligase CBL significantly contributes to this ubiquitination. As to expression, expressed at a low level in a large number of cells of hematopoietic origin. Isoform 1 and isoform 2 are always found to be coexpressed.

The protein localises to the cell membrane. It is found in the golgi apparatus. The protein resides in the cell surface. In terms of biological role, receptor for thrombopoietin that regulates hematopoietic stem cell renewal, megakaryocyte differentiation, and platelet formation. Upon activation by THPO, induces rapid tyrosine phosphorylation and activation of JAK2, providing docking sites for many signaling proteins such as STAT5, SHIP/INPP5D, GRB2, SOS1 and PI3K. In turn, These signaling cascades lead to the proliferation, survival, and differentiation of megakaryocytes, ultimately leading to increased platelet production. The sequence is that of Thrombopoietin receptor (MPL) from Homo sapiens (Human).